A 345-amino-acid polypeptide reads, in one-letter code: Anthranilate phosphoribosyltransferase (345 aa).

5-phospho-alpha-D-ribose 1-diphosphate contacts are provided by residues G80, 83-84 (GD), T88, 90-93 (NIST), 108-116 (KHGNRSVSS), and S120. An anthranilate-binding site is contributed by G80. Residue S92 coordinates Mg(2+). N111 lines the anthranilate pocket. Residue R166 participates in anthranilate binding. Mg(2+) contacts are provided by D225 and E226.

Belongs to the anthranilate phosphoribosyltransferase family. In terms of assembly, homodimer. It depends on Mg(2+) as a cofactor.

It carries out the reaction N-(5-phospho-beta-D-ribosyl)anthranilate + diphosphate = 5-phospho-alpha-D-ribose 1-diphosphate + anthranilate. Its pathway is amino-acid biosynthesis; L-tryptophan biosynthesis; L-tryptophan from chorismate: step 2/5. Functionally, catalyzes the transfer of the phosphoribosyl group of 5-phosphorylribose-1-pyrophosphate (PRPP) to anthranilate to yield N-(5'-phosphoribosyl)-anthranilate (PRA). This is Anthranilate phosphoribosyltransferase from Desulforamulus reducens (strain ATCC BAA-1160 / DSM 100696 / MI-1) (Desulfotomaculum reducens).